A 2623-amino-acid polypeptide reads, in one-letter code: Probable polyketide synthase 31 (2623 aa).

Over residues 1-11 (MTQNIDNNNNK) the composition is skewed to low complexity. The segment at 1–25 (MTQNIDNNNNKLIRDRNDDDDVDRN) is disordered. The Ketosynthase family 3 (KS3) domain occupies 27-461 (DGDVAVIGIG…GSNVCLILSE (435 aa)). Active-site for beta-ketoacyl synthase activity residues include C199, H338, and H384. The interval 666-699 (GVSADIIIGHSLGEVSSPYCSGMIDFQTLCYLIY) is acyl/malonyl transferase. S676 acts as the For acyl/malonyl transferase activity in catalysis. An N-terminal hotdog fold region spans residues 959–1088 (HEKIKSEGPS…GNFNLTKHNS (130 aa)). One can recognise a PKS/mFAS DH domain in the interval 959 to 1267 (HEKIKSEGPS…CALVSLGSNP (309 aa)). H1000 (proton acceptor; for dehydratase activity) is an active-site residue. The C-terminal hotdog fold stretch occupies residues 1105-1267 (NFTSISKQDF…CALVSLGSNP (163 aa)). The Proton donor; for dehydratase activity role is filled by D1177. A Carrier domain is found at 2524–2601 (ANNEIIHSTI…QSIEIIKSAK (78 aa)). Residue S2561 is modified to O-(pantetheine 4'-phosphoryl)serine. Positions 2600-2623 (AKNNNKNNNNNNNKNNSNNKNKNN) are disordered. Residues 2601-2623 (KNNNKNNNNNNNKNNSNNKNKNN) are compositionally biased toward low complexity.

Pantetheine 4'-phosphate serves as cofactor.

In terms of biological role, probable polyketide synthase. The polypeptide is Probable polyketide synthase 31 (pks31) (Dictyostelium discoideum (Social amoeba)).